Reading from the N-terminus, the 66-residue chain is Large ribosomal subunit protein bL33c (66 aa).

This sequence belongs to the bacterial ribosomal protein bL33 family.

Its subcellular location is the plastid. The protein resides in the chloroplast. The chain is Large ribosomal subunit protein bL33c from Liriodendron tulipifera (Tuliptree).